We begin with the raw amino-acid sequence, 292 residues long: MAVDPRVLQQEAEKTLASASKGWGLFGNKEDKYQNAADQYIQAANAFRLQKSNTEAGKCFEEAAKIFTEKLKEPNDAANAMLDAFKVYRKDAPDNAVRCVEVAIKQYTMAGNFRRAASHKENQAEVYENELQNKPEAIKAYTTAAEWYENDGAVALANKLWLKVADLSALAGDFFAAIEKFEKVAEASLGNNLMRYSVKEYFLKAGLCSLATKDMVTAQRNITKYAEKDPSFTGQREYQLLVDLLEAASNNNLEMFQDKLAAYDKMSRLDDWKAAVLLQIKNNFEEADNEFS.

Belongs to the SNAP family.

Its subcellular location is the membrane. In terms of biological role, required for vesicular transport between the endoplasmic reticulum and the Golgi apparatus. This is Probable vesicular-fusion protein sec17 homolog from Neurospora crassa (strain ATCC 24698 / 74-OR23-1A / CBS 708.71 / DSM 1257 / FGSC 987).